We begin with the raw amino-acid sequence, 242 residues long: Ribonuclease 3 (242 aa).

The RNase III domain maps to 10 to 146 (LQNFNKKFAD…FVGALYLDQG (137 aa)). Glutamate 59 contacts Mg(2+). Aspartate 63 is a catalytic residue. The Mg(2+) site is built by aspartate 132 and glutamate 135. Residue glutamate 135 is part of the active site. The DRBM domain maps to 172 to 241 (DFKTQFQELI…AEKAYNDMKK (70 aa)). Positions 216–242 (VAKGQGRTKKESEQKAAEKAYNDMKKK) are disordered. A compositionally biased stretch (basic and acidic residues) spans 223–242 (TKKESEQKAAEKAYNDMKKK).

The protein belongs to the ribonuclease III family. In terms of assembly, homodimer. Mg(2+) serves as cofactor.

The protein resides in the cytoplasm. It catalyses the reaction Endonucleolytic cleavage to 5'-phosphomonoester.. Digests double-stranded RNA. Involved in the processing of primary rRNA transcript to yield the immediate precursors to the large and small rRNAs (23S and 16S). Processes some mRNAs, and tRNAs when they are encoded in the rRNA operon. Processes pre-crRNA and tracrRNA of type II CRISPR loci if present in the organism. The protein is Ribonuclease 3 of Staphylococcus carnosus (strain TM300).